The chain runs to 61 residues: Large ribosomal subunit protein uL29 (61 aa).

The protein belongs to the universal ribosomal protein uL29 family.

The sequence is that of Large ribosomal subunit protein uL29 from Stenotrophomonas maltophilia (strain K279a).